Reading from the N-terminus, the 120-residue chain is Secreted RxLR effector protein 29 (120 aa).

The signal sequence occupies residues 1 to 21; the sequence is MRRTAFIVLSLVALIAPCVTS. The RxLR-dEER motif lies at 47–64; the sequence is RHLRSEANGRLAVVDEEK.

It belongs to the RxLR effector family.

The protein localises to the secreted. It is found in the host cytoplasm. Its subcellular location is the host nucleus. Its function is as follows. Effector that acts as a broad suppressor of cell death to interrupt plant immunity. Inhibits cell death induced by cell death-inducing proteins, including the PAMP elicitor INF1 from P.infestans. This Plasmopara viticola (Downy mildew of grapevine) protein is Secreted RxLR effector protein 29.